We begin with the raw amino-acid sequence, 578 residues long: 2-succinyl-5-enolpyruvyl-6-hydroxy-3-cyclohexene-1-carboxylate synthase (578 aa).

Belongs to the TPP enzyme family. MenD subfamily. In terms of assembly, homodimer. Mg(2+) is required as a cofactor. It depends on Mn(2+) as a cofactor. Thiamine diphosphate serves as cofactor.

The catalysed reaction is isochorismate + 2-oxoglutarate + H(+) = 5-enolpyruvoyl-6-hydroxy-2-succinyl-cyclohex-3-ene-1-carboxylate + CO2. It functions in the pathway quinol/quinone metabolism; 1,4-dihydroxy-2-naphthoate biosynthesis; 1,4-dihydroxy-2-naphthoate from chorismate: step 2/7. It participates in quinol/quinone metabolism; menaquinone biosynthesis. Catalyzes the thiamine diphosphate-dependent decarboxylation of 2-oxoglutarate and the subsequent addition of the resulting succinic semialdehyde-thiamine pyrophosphate anion to isochorismate to yield 2-succinyl-5-enolpyruvyl-6-hydroxy-3-cyclohexene-1-carboxylate (SEPHCHC). In Bacillus velezensis (strain DSM 23117 / BGSC 10A6 / LMG 26770 / FZB42) (Bacillus amyloliquefaciens subsp. plantarum), this protein is 2-succinyl-5-enolpyruvyl-6-hydroxy-3-cyclohexene-1-carboxylate synthase.